The primary structure comprises 35 residues: Photosystem II reaction center protein M (35 aa).

The chain crosses the membrane as a helical span at residues Ile5–Leu25.

Belongs to the PsbM family. As to quaternary structure, PSII is composed of 1 copy each of membrane proteins PsbA, PsbB, PsbC, PsbD, PsbE, PsbF, PsbH, PsbI, PsbJ, PsbK, PsbL, PsbM, PsbT, PsbX, PsbY, PsbZ, Psb30/Ycf12, at least 3 peripheral proteins of the oxygen-evolving complex and a large number of cofactors. It forms dimeric complexes.

Its subcellular location is the plastid. The protein localises to the chloroplast thylakoid membrane. Its function is as follows. One of the components of the core complex of photosystem II (PSII). PSII is a light-driven water:plastoquinone oxidoreductase that uses light energy to abstract electrons from H(2)O, generating O(2) and a proton gradient subsequently used for ATP formation. It consists of a core antenna complex that captures photons, and an electron transfer chain that converts photonic excitation into a charge separation. This subunit is found at the monomer-monomer interface. The polypeptide is Photosystem II reaction center protein M (Chara vulgaris (Common stonewort)).